The chain runs to 737 residues: Translation initiation factor IF-2 (737 aa).

Positions 55–152 are disordered; the sequence is KKKEHIQHNK…PVPPRKNKPL (98 aa). Positions 60–70 are enriched in basic and acidic residues; it reads IQHNKNKDNFH. The span at 88 to 98 shows a compositional bias: basic residues; it reads KNVHKNNRKRS. Positions 105-121 are enriched in low complexity; that stretch reads NNNAKNGQRNNRNNRSN. The segment covering 122–131 has biased composition (basic residues); that stretch reads NKFKNKRNNN. The segment covering 132–142 has biased composition (low complexity); sequence NKRNNNFKKGN. One can recognise a tr-type G domain in the interval 238-407; it reads KRPPVVTIMG…LLEAEMLELH (170 aa). The interval 247–254 is G1; the sequence is GHVDHGKT. 247–254 is a binding site for GTP; the sequence is GHVDHGKT. The segment at 272 to 276 is G2; it reads GITQH. Residues 293–296 form a G3 region; the sequence is DTPG. GTP-binding positions include 293–297 and 347–350; these read DTPGH and NKID. The G4 stretch occupies residues 347-350; it reads NKID. The tract at residues 383–385 is G5; that stretch reads SAK.

It belongs to the TRAFAC class translation factor GTPase superfamily. Classic translation factor GTPase family. IF-2 subfamily.

The protein localises to the cytoplasm. In terms of biological role, one of the essential components for the initiation of protein synthesis. Protects formylmethionyl-tRNA from spontaneous hydrolysis and promotes its binding to the 30S ribosomal subunits. Also involved in the hydrolysis of GTP during the formation of the 70S ribosomal complex. The polypeptide is Translation initiation factor IF-2 (Ligilactobacillus salivarius (strain UCC118) (Lactobacillus salivarius)).